Consider the following 437-residue polypeptide: Enolase 2 (437 aa).

Positions 160 and 169 each coordinate substrate. The Proton donor role is filled by glutamate 212. Mg(2+) contacts are provided by aspartate 247, glutamate 296, and aspartate 321. 2 residues coordinate substrate: glutamate 296 and aspartate 321. Lysine 346 serves as the catalytic Proton acceptor. Residues 373 to 376 (SHRS) and lysine 397 contribute to the substrate site.

The protein belongs to the enolase family. As to quaternary structure, homodimer. Mg(2+) serves as cofactor.

The protein resides in the cytoplasm. The enzyme catalyses (2R)-2-phosphoglycerate = phosphoenolpyruvate + H2O. It functions in the pathway carbohydrate degradation; glycolysis; pyruvate from D-glyceraldehyde 3-phosphate: step 4/5. The sequence is that of Enolase 2 (ENO2) from Candida glabrata (strain ATCC 2001 / BCRC 20586 / JCM 3761 / NBRC 0622 / NRRL Y-65 / CBS 138) (Yeast).